We begin with the raw amino-acid sequence, 308 residues long: Homoserine kinase (308 aa).

95–105 lines the ATP pocket; sequence PQSRGLGSSAA.

It belongs to the GHMP kinase family. Homoserine kinase subfamily.

The protein resides in the cytoplasm. It catalyses the reaction L-homoserine + ATP = O-phospho-L-homoserine + ADP + H(+). It participates in amino-acid biosynthesis; L-threonine biosynthesis; L-threonine from L-aspartate: step 4/5. In terms of biological role, catalyzes the ATP-dependent phosphorylation of L-homoserine to L-homoserine phosphate. The protein is Homoserine kinase of Corynebacterium jeikeium (strain K411).